Consider the following 99-residue polypeptide: MYIVMNSNFCAIYKSMSKEGMFLYIAQRDKFNAVPEQLLQMFGKPQFVMLFNLAGEKPLKQVNNQDVLLAIKTQGFFLQISPPAENLLKQFLIQKGEKK.

In terms of domain architecture, YcgL spans 8-92; sequence NFCAIYKSMS…PAENLLKQFL (85 aa).

This Haemophilus ducreyi (strain 35000HP / ATCC 700724) protein is YcgL domain-containing protein HD_1373.